A 348-amino-acid chain; its full sequence is Protein RecA (348 aa).

65–72 (GPESSGKT) serves as a coordination point for ATP.

It belongs to the RecA family.

Its subcellular location is the cytoplasm. Can catalyze the hydrolysis of ATP in the presence of single-stranded DNA, the ATP-dependent uptake of single-stranded DNA by duplex DNA, and the ATP-dependent hybridization of homologous single-stranded DNAs. It interacts with LexA causing its activation and leading to its autocatalytic cleavage. The polypeptide is Protein RecA (Enterococcus faecalis (strain ATCC 700802 / V583)).